Reading from the N-terminus, the 265-residue chain is Aquaporin-5 (265 aa).

Residues 1-12 lie on the Cytoplasmic side of the membrane; sequence MKKEVCSLAFLK. A helical membrane pass occupies residues 13-33; sequence AVFAEFLATLIFVFFGLASAL. Residues 34 to 39 lie on the Extracellular side of the membrane; the sequence is KWPSAL. A helical membrane pass occupies residues 40-60; the sequence is PTILQIALAFGLAIGTLAQAL. At 61-65 the chain is on the cytoplasmic side; sequence GPVSG. Positions 66–74 form an intramembrane region, discontinuously helical; the sequence is GHINPAITL. The NPA 1 motif lies at 69–71; the sequence is NPA. Residues 75–87 are Cytoplasmic-facing; that stretch reads ALLVGNQISLLRA. Residues 88-108 traverse the membrane as a helical segment; the sequence is VFYVVAQLVGAIAGAGILYGL. Residues 109 to 126 lie on the Extracellular side of the membrane; it reads APGNARGNLAVNSLNNNT. A glycan (N-linked (GlcNAc...) asparagine) is linked at N124. The helical transmembrane segment at 127 to 147 threads the bilayer; it reads TPGQAVVVEMILTFQLALCIF. Over 148–158 the chain is Cytoplasmic; that stretch reads SSTDSRRTSPV. The helical transmembrane segment at 159 to 179 threads the bilayer; that stretch reads GSPALSIGLSVTLGHLVGIYF. A topological domain (extracellular) is located at residue T180. The discontinuously helical intramembrane region spans 181-191; it reads GCSMNPARSFG. The NPA 2 signature appears at 185–187; that stretch reads NPA. Residues 192–203 are Extracellular-facing; sequence PAVVMNRFSPSH. A helical transmembrane segment spans residues 204-224; the sequence is WVFWVGPIVGAAVAAILYFYL. At 225-265 the chain is on the cytoplasmic side; that stretch reads LFPNSLSLSERVAVVKGTYESEEDWEEQREERKKTMELTAH.

This sequence belongs to the MIP/aquaporin (TC 1.A.8) family. As to quaternary structure, homotetramer; each monomer provides an independent water pore. Interacts with TRPV4; the interaction is probably indirect and regulates TRPV4 activation by hypotonicity.

Its subcellular location is the apical cell membrane. It is found in the cell membrane. It localises to the cytoplasmic vesicle membrane. The catalysed reaction is H2O(in) = H2O(out). In terms of biological role, aquaporins form homotetrameric transmembrane channels, with each monomer independently mediating water transport across the plasma membrane along its osmotic gradient. Plays an important role in fluid secretion in salivary glands. Required for TRPV4 activation by hypotonicity. Together with TRPV4, controls regulatory volume decrease in salivary epithelial cells. Seems to play a redundant role in water transport in the eye, lung and in sweat glands. In Sus scrofa (Pig), this protein is Aquaporin-5.